The chain runs to 228 residues: Triosephosphate isomerase (228 aa).

A substrate-binding site is contributed by 9–11 (NFK). The active-site Electrophile is His-93. Glu-141 acts as the Proton acceptor in catalysis. Residues Ile-146, Gly-181, and 202 to 203 (AS) each bind substrate.

The protein belongs to the triosephosphate isomerase family. In terms of assembly, homotetramer; dimer of dimers.

It localises to the cytoplasm. The enzyme catalyses D-glyceraldehyde 3-phosphate = dihydroxyacetone phosphate. Its pathway is carbohydrate biosynthesis; gluconeogenesis. The protein operates within carbohydrate degradation; glycolysis; D-glyceraldehyde 3-phosphate from glycerone phosphate: step 1/1. In terms of biological role, involved in the gluconeogenesis. Catalyzes stereospecifically the conversion of dihydroxyacetone phosphate (DHAP) to D-glyceraldehyde-3-phosphate (G3P). The protein is Triosephosphate isomerase of Pyrobaculum calidifontis (strain DSM 21063 / JCM 11548 / VA1).